The chain runs to 676 residues: Methionine--tRNA ligase (676 aa).

The short motif at 15 to 25 (PYANGSIHLGH) is the 'HIGH' region element. Zn(2+) contacts are provided by C146, C149, C159, and C162. Residues 332–336 (KMSKS) carry the 'KMSKS' region motif. K335 lines the ATP pocket. A tRNA-binding domain is found at 574-676 (DFAKVDMRIA…SGAQPGQQVK (103 aa)).

The protein belongs to the class-I aminoacyl-tRNA synthetase family. MetG type 1 subfamily. In terms of assembly, homodimer. The cofactor is Zn(2+).

The protein resides in the cytoplasm. It carries out the reaction tRNA(Met) + L-methionine + ATP = L-methionyl-tRNA(Met) + AMP + diphosphate. Functionally, is required not only for elongation of protein synthesis but also for the initiation of all mRNA translation through initiator tRNA(fMet) aminoacylation. This Erwinia tasmaniensis (strain DSM 17950 / CFBP 7177 / CIP 109463 / NCPPB 4357 / Et1/99) protein is Methionine--tRNA ligase.